A 173-amino-acid chain; its full sequence is ATP synthase subunit b (173 aa).

Residues 15–35 (GVEWGTVIVQVLTFIVLLALL) form a helical membrane-spanning segment.

This sequence belongs to the ATPase B chain family. In terms of assembly, F-type ATPases have 2 components, F(1) - the catalytic core - and F(0) - the membrane proton channel. F(1) has five subunits: alpha(3), beta(3), gamma(1), delta(1), epsilon(1). F(0) has three main subunits: a(1), b(2) and c(10-14). The alpha and beta chains form an alternating ring which encloses part of the gamma chain. F(1) is attached to F(0) by a central stalk formed by the gamma and epsilon chains, while a peripheral stalk is formed by the delta and b chains.

It is found in the cell membrane. Its function is as follows. F(1)F(0) ATP synthase produces ATP from ADP in the presence of a proton or sodium gradient. F-type ATPases consist of two structural domains, F(1) containing the extramembraneous catalytic core and F(0) containing the membrane proton channel, linked together by a central stalk and a peripheral stalk. During catalysis, ATP synthesis in the catalytic domain of F(1) is coupled via a rotary mechanism of the central stalk subunits to proton translocation. In terms of biological role, component of the F(0) channel, it forms part of the peripheral stalk, linking F(1) to F(0). The sequence is that of ATP synthase subunit b from Staphylococcus aureus (strain MRSA252).